Consider the following 80-residue polypeptide: Cell division topological specificity factor (80 aa).

It belongs to the MinE family.

Prevents the cell division inhibition by proteins MinC and MinD at internal division sites while permitting inhibition at polar sites. This ensures cell division at the proper site by restricting the formation of a division septum at the midpoint of the long axis of the cell. In Wolinella succinogenes (strain ATCC 29543 / DSM 1740 / CCUG 13145 / JCM 31913 / LMG 7466 / NCTC 11488 / FDC 602W) (Vibrio succinogenes), this protein is Cell division topological specificity factor.